The primary structure comprises 269 residues: Formamidopyrimidine-DNA glycosylase (269 aa).

P2 acts as the Schiff-base intermediate with DNA in catalysis. The active-site Proton donor is the E3. K57 acts as the Proton donor; for beta-elimination activity in catalysis. DNA-binding residues include H90, R109, and K150. The segment at 235–269 (QVYGRGGEPCRVCGTPIQMAKHGQRSTFFCPACQH) adopts an FPG-type zinc-finger fold. The Proton donor; for delta-elimination activity role is filled by R259.

This sequence belongs to the FPG family. As to quaternary structure, monomer. Requires Zn(2+) as cofactor.

The enzyme catalyses Hydrolysis of DNA containing ring-opened 7-methylguanine residues, releasing 2,6-diamino-4-hydroxy-5-(N-methyl)formamidopyrimidine.. The catalysed reaction is 2'-deoxyribonucleotide-(2'-deoxyribose 5'-phosphate)-2'-deoxyribonucleotide-DNA = a 3'-end 2'-deoxyribonucleotide-(2,3-dehydro-2,3-deoxyribose 5'-phosphate)-DNA + a 5'-end 5'-phospho-2'-deoxyribonucleoside-DNA + H(+). In terms of biological role, involved in base excision repair of DNA damaged by oxidation or by mutagenic agents. Acts as a DNA glycosylase that recognizes and removes damaged bases. Has a preference for oxidized purines, such as 7,8-dihydro-8-oxoguanine (8-oxoG). Has AP (apurinic/apyrimidinic) lyase activity and introduces nicks in the DNA strand. Cleaves the DNA backbone by beta-delta elimination to generate a single-strand break at the site of the removed base with both 3'- and 5'-phosphates. The sequence is that of Formamidopyrimidine-DNA glycosylase from Sodalis glossinidius (strain morsitans).